The primary structure comprises 175 residues: Zinc finger A20 and AN1 domain-containing stress-associated protein 7 (175 aa).

The A20-type zinc finger occupies 13–47 (PTEPKLCDNGCGFFGSPSNMNLCSKCYRSLRAEED). Zn(2+)-binding residues include Cys19, Cys23, Cys35, Cys38, Cys116, Cys119, Cys130, Cys132, Cys137, His140, His146, and Cys148. Residues 110-156 (VRPNNRCFSCNKKVGVMGFKCKCGSTFCGSHRYPEKHECSFDFKEVG) form an AN1-type zinc finger.

Its function is as follows. May be involved in environmental stress response. The protein is Zinc finger A20 and AN1 domain-containing stress-associated protein 7 (SAP7) of Arabidopsis thaliana (Mouse-ear cress).